Here is a 763-residue protein sequence, read N- to C-terminus: Thiamine biosynthesis multifunctional protein ThiED (763 aa).

A thiamine-phosphate synthase region spans residues 1–210; sequence MTDFSLYLVT…ANPAAAATRL (210 aa). Residues 37–41 and Asn-69 each bind 4-amino-2-methyl-5-(diphosphooxymethyl)pyrimidine; that span reads QLRDK. 2 residues coordinate Mg(2+): Asp-70 and Asp-88. A 4-amino-2-methyl-5-(diphosphooxymethyl)pyrimidine-binding site is contributed by Ser-107. Residue 140 to 142 participates in 2-[(2R,5Z)-2-carboxy-4-methylthiazol-5(2H)-ylidene]ethyl phosphate binding; the sequence is TAT. Lys-143 contributes to the 4-amino-2-methyl-5-(diphosphooxymethyl)pyrimidine binding site. Residues Gly-174 and 194–195 contribute to the 2-[(2R,5Z)-2-carboxy-4-methylthiazol-5(2H)-ylidene]ethyl phosphate site; that span reads VS. Residues 245-500 form a hydroxymethylpyrimidine/phosphomethylpyrimidine kinase region; sequence LSIAGTDPTG…GTGNGPVDHG (256 aa). Gln-282 provides a ligand contact to 4-amino-5-hydroxymethyl-2-methylpyrimidine. A thiaminase-2 region spans residues 550–763; sequence FTRALWEASG…RHGWTMVGSS (214 aa).

It in the N-terminal section; belongs to the thiamine-phosphate synthase family. The protein in the central section; belongs to the ThiD family. This sequence in the C-terminal section; belongs to the thiaminase-2 family. It depends on Mg(2+) as a cofactor.

The enzyme catalyses 2-[(2R,5Z)-2-carboxy-4-methylthiazol-5(2H)-ylidene]ethyl phosphate + 4-amino-2-methyl-5-(diphosphooxymethyl)pyrimidine + 2 H(+) = thiamine phosphate + CO2 + diphosphate. The catalysed reaction is 2-(2-carboxy-4-methylthiazol-5-yl)ethyl phosphate + 4-amino-2-methyl-5-(diphosphooxymethyl)pyrimidine + 2 H(+) = thiamine phosphate + CO2 + diphosphate. It carries out the reaction 4-methyl-5-(2-phosphooxyethyl)-thiazole + 4-amino-2-methyl-5-(diphosphooxymethyl)pyrimidine + H(+) = thiamine phosphate + diphosphate. It catalyses the reaction 4-amino-5-hydroxymethyl-2-methylpyrimidine + ATP = 4-amino-2-methyl-5-(phosphooxymethyl)pyrimidine + ADP + H(+). The enzyme catalyses 4-amino-2-methyl-5-(phosphooxymethyl)pyrimidine + ATP = 4-amino-2-methyl-5-(diphosphooxymethyl)pyrimidine + ADP. The protein operates within cofactor biosynthesis; thiamine diphosphate biosynthesis; 4-amino-2-methyl-5-diphosphomethylpyrimidine from 5-amino-1-(5-phospho-D-ribosyl)imidazole: step 3/3. It functions in the pathway cofactor biosynthesis; thiamine diphosphate biosynthesis; thiamine phosphate from 4-amino-2-methyl-5-diphosphomethylpyrimidine and 4-methyl-5-(2-phosphoethyl)-thiazole: step 1/1. Functionally, condenses 4-methyl-5-(beta-hydroxyethyl)thiazole monophosphate (THZ-P) and 2-methyl-4-amino-5-hydroxymethyl pyrimidine pyrophosphate (HMP-PP) to form thiamine monophosphate (TMP). In terms of biological role, catalyzes the phosphorylation of hydroxymethylpyrimidine phosphate (HMP-P) to HMP-PP, and of HMP to HMP-P. The sequence is that of Thiamine biosynthesis multifunctional protein ThiED (theD) from Corynebacterium glutamicum (strain ATCC 13032 / DSM 20300 / JCM 1318 / BCRC 11384 / CCUG 27702 / LMG 3730 / NBRC 12168 / NCIMB 10025 / NRRL B-2784 / 534).